A 341-amino-acid polypeptide reads, in one-letter code: MQYKKSLVASALVTTSLAAYAPKDPWSTLTPSATYKGGITDYSSTFGIAVEPIATTASSKAKRAAAISQIGDGQIQATTKTTAAAVSQIGDGQIQATTKTKAAAVSQIGDGQIQATTKTTSAKTTAAAVSQIGDGQIQATTKTKAAAVSQIGDGQIQATTKTTAAAVSQIGDGQIQATTKTTAAAVSQIGDGQIQATTNTTVAPVSQITDGQIQATTLTSATIIPSPAPAPITNGTDPVTAETCKSSGTLEMNLKGGILTDGKGRIGSIVANRQFQFDGPPPQAGAIYAAGWSITPEGNLAIGDQDTFYQCLSGNFYNLYDEHIGTQCNAVHLQAIDLVNC.

The signal sequence occupies residues 1-18; sequence MQYKKSLVASALVTTSLA. A propeptide spanning residues 19 to 63 is cleaved from the precursor; the sequence is AYAPKDPWSTLTPSATYKGGITDYSSTFGIAVEPIATTASSKAKR. 8 PIR1/2/3 repeats span residues 64-82, 83-101, 102-120, 126-144, 145-163, 164-182, 183-201, and 202-220; these read AAAI…TKTT, AAAV…TKTK, AAAV…TKTT, AAAV…TNTT, and VAPV…TLTS.

This sequence belongs to the PIR protein family. In terms of processing, covalently linked to beta-1,3-glucan of the inner cell wall layer via an alkali-sensitive ester linkage between the gamma-carboxyl group of glutamic acids, arising from specific glutamines within the PIR1/2/3 repeats, and hydroxyl groups of glucoses of beta-1,3-glucan chains. O-glycosylated. Extensively O-mannosylated.

The protein resides in the secreted. Its subcellular location is the cell wall. Component of the outer cell wall layer. Required for stability of the cell wall and for optimal growth. Required for resistance against several antifungal and cell wall-perturbing agents and for tolerance to heat shock. The sequence is that of Cell wall mannoprotein PIR1 (PIR1) from Saccharomyces cerevisiae (strain RM11-1a) (Baker's yeast).